Reading from the N-terminus, the 687-residue chain is MSSGECSNVQLDDHRKNNLEIDEGREFESKEEAFEFYKEYANSVGFTTIIKASRRSRMTGKFIDAKFVCTRYGSKKEDIDTGLGTDGFNIPQARKRGRINRSSSKTDCKAFLHVKRRQDGRWVVRSLVKEHNHEIFTGQADSLRELSGRRKLEKLNGAIVKEVKSRKLEDGDVERLLNFFTDMQVENPFFFYSIDLSEEQSLRNIFWVDAKAMHGCRPRVILTKHDQMLKEAVLEVFPSSRHCFYMWDTLGQMPEKLGHVIRLEKKLVDEINDAIYGSCQSEDFEKNWWEVVDRFHMRDNVWLQSLYEDREYWVPVYMKDVSLAGMCTAQRSDSVNSGLDKYIQRKTTFKAFLEQYKKMIQERYEEEEKSEIETLYKQPGLKSPSPFGKQMAEVYTREMFKKFQVEVLGGVACHPKKESEEDGVNKRTFRVQDYEQNRSFVVVWNSESSEVVCSCRLFELKGFLCRHAMIVLQMSGELSIPSQYVLKRWTKDAKSREVMESDQTDVESTKAQRYKDLCLRSLKLSEEASLSEESYNAVVNVLNEALRKWENKSNLIQNLEESESVTAQDLPIHEEQNNTYDMNKDDNVADTGQEYSLQEVWKVTALQEQRNRYSILDDYLSAQHMSHEMGQINSMASNRNGYCSVHQNIHSLQGQSITHPRLYETEQSSFRPEAMYERLQDMVKDLN.

An FAR1 domain is found at 35 to 137 (EFYKEYANSV…VKEHNHEIFT (103 aa)). The 44-residue stretch at 211–254 (KAMHGCRPRVILTKHDQMLKEAVLEVFPSSRHCFYMWDTLGQMP) folds into the MULE domain. Residues 440-476 (FVVVWNSESSEVVCSCRLFELKGFLCRHAMIVLQMSG) form an SWIM-type zinc finger. Positions 540 to 562 (NVLNEALRKWENKSNLIQNLEES) form a coiled coil.

It belongs to the FHY3/FAR1 family. As to expression, expressed in rosette and cauline leaves, inflorescences stems, flowers and siliques.

It is found in the nucleus. Putative transcription activator involved in regulating light control of development. The sequence is that of Protein FAR1-RELATED SEQUENCE 1 (FRS1) from Arabidopsis thaliana (Mouse-ear cress).